We begin with the raw amino-acid sequence, 625 residues long: Interferon-induced GTP-binding protein MxE (625 aa).

The 274-residue stretch at 40-313 (DLNLPAIAVI…LVEHIAKNLP (274 aa)) folds into the Dynamin-type G domain. Positions 50 to 57 (GDQSSGKS) are G1 motif. 50–57 (GDQSSGKS) contacts GTP. Residues 75-77 (VTR) are G2 motif. A G3 motif region spans residues 151 to 154 (DLPG). GTP contacts are provided by residues 151–155 (DLPGI) and 220–223 (TKPD). Residues 220–223 (TKPD) are G4 motif. A G5 motif region spans residues 252-255 (KCRG). The GED domain maps to 536-625 (VREMAYHLTS…RVLSKFVHSA (90 aa)).

This sequence belongs to the TRAFAC class dynamin-like GTPase superfamily. Dynamin/Fzo/YdjA family.

The protein resides in the cytoplasm. The polypeptide is Interferon-induced GTP-binding protein MxE (mxe) (Danio rerio (Zebrafish)).